Reading from the N-terminus, the 488-residue chain is MADPGGFLKYTHRKLPKRRPVPLRLRDWREVYEEFDNESLRQQATRCMDCGIPFCHNGCPLGNLIPEWNDLVRRGRWRDAIERLHATNNFPDFTGRLCPAPCEPACVLGINQDPVTIKQIELEIIDKAFDEGWVQPRPPRKLTGQTVAVVGSGPAGLAAAQQLTRAGHTVTVFEREDRIGGLLRYGIPEFKMEKRHLDRRLDQMRSEGTEFRPGVNVGVDISAEKLRADFDAVVLAGGATAWRELPIPGRELEGVHQAMEFLPWANRVQEGDDVLDEDGQPPITAKGKKVVIIGGGDTGADCLGTVHRQGAIAVHQFEIMPRPPDARAESTPWPTYPLMYRVSAAHEEGGERVFSVNTEAFVGTDGRVSALRAHEVTMLDGKFVKVEGSDFELEADLVLLAMGFVGPERAGLLTDLGVKFTERGNVARGDDFDTSVPGVFVAGDMGRGQSLIVWAIAEGRAAAAAVDRYLMGSSALPAPVKPTAAPLQ.

Residues 38–69 (ESLRQQATRCMDCGIPFCHNGCPLGNLIPEWN) enclose the 4Fe-4S ferredoxin-type domain.

The cofactor is [4Fe-4S] cluster.

The catalysed reaction is 2 L-glutamate + NADP(+) = L-glutamine + 2-oxoglutarate + NADPH + H(+). It functions in the pathway amino-acid biosynthesis; L-glutamate biosynthesis via GLT pathway; L-glutamate from 2-oxoglutarate and L-glutamine (NADP(+) route): step 1/1. The sequence is that of Glutamate synthase [NADPH] small chain (gltD) from Mycobacterium tuberculosis (strain CDC 1551 / Oshkosh).